Consider the following 130-residue polypeptide: Ion transport peptide (130 aa).

3 disulfides stabilise this stretch: Cys62-Cys98, Cys78-Cys94, and Cys81-Cys107. At Leu127 the chain carries Leucine amide.

It belongs to the arthropod CHH/MIH/GIH/VIH hormone family. In terms of tissue distribution, brain and corpus cardiacum.

It localises to the secreted. Functionally, stimulates salt and water reabsorption and inhibits acid secretion in the ileum of S.gregaria. The chain is Ion transport peptide from Schistocerca gregaria (Desert locust).